The primary structure comprises 182 residues: Probable tyrosine phosphatase protein H4 (182 aa).

One can recognise a Tyrosine-protein phosphatase domain in the interval 1–182 (MEINKFICSQ…TVLKIQKSKI (182 aa)). The Phosphocysteine intermediate role is filled by Cys142.

This sequence belongs to the protein-tyrosine phosphatase family.

It carries out the reaction O-phospho-L-tyrosyl-[protein] + H2O = L-tyrosyl-[protein] + phosphate. This chain is Probable tyrosine phosphatase protein H4 (H5), found in Microplitis demolitor (Parasitoid wasp).